The sequence spans 309 residues: MTVTVKMLVDKLKLKVIYGNEKLLSKPITTADISRPGLEMTGYFDFYSPERIQLVGMKEWSYLKTLTDHNRYSVFSNMFKEETPAVIVARGLDIPEEMYRAAKENGVAVLQGRNGTSSLSGDMSWYLNAQLAERTSVHGVLVDIYGMGVLIQGDSGIGKSETGLELVKRGHRLVADDRVDVYAKDEETLWGEPAEILHHLLEIRGVGIIDVMSLYGASAVRNSSQVQLAIYLENFEDGKVFDRLGNGNEEIELQGVKIPRVRIPVKTGRNVSVVIEAAAMNYRAKQMGFDATKTFEERLTNLISKNGED.

Residues H138 and K159 contribute to the active site. 153–160 (GDSGIGKS) provides a ligand contact to ATP. Residue S160 coordinates Mg(2+). Residue D177 is the Proton acceptor; for phosphorylation activity. Proton donor; for dephosphorylation activity of the active site. Positions 201–210 (LEIRGVGIID) are important for the catalytic mechanism of both phosphorylation and dephosphorylation. Residue E202 coordinates Mg(2+). Residue R243 is part of the active site. An important for the catalytic mechanism of dephosphorylation region spans residues 264-269 (PVKTGR).

It belongs to the HPrK/P family. In terms of assembly, homohexamer. The cofactor is Mg(2+).

It carries out the reaction [HPr protein]-L-serine + ATP = [HPr protein]-O-phospho-L-serine + ADP + H(+). The enzyme catalyses [HPr protein]-O-phospho-L-serine + phosphate + H(+) = [HPr protein]-L-serine + diphosphate. Its activity is regulated as follows. Kinase activity is slightly activated by fructose 1,6-bisphosphate (FBP) at low ATP concentrations, and is inhibited by inorganic phosphate (Pi). Moreover, FBP, phosphoenolpyruvate and 2-phosphoglycerate, but not fructose 1-P, fructose 6-P, and ribulose 1,5-bisphosphate protect kinase activity against inhibition by Pi. Dephosphorylation of P-Ser-HPr by S.salivarius HPrK/P is strictly dependent on the presence of Pi, and is inhibited by FBP. FBP seems to modulate HPrK/P activities by enhancing affinity of the active site for ATP and, conversely, lowering the affinity for Pi. In terms of biological role, catalyzes the ATP- as well as probably the pyrophosphate-dependent phosphorylation of 'Ser-46' in HPr, a phosphocarrier protein of the phosphoenolpyruvate-dependent sugar phosphotransferase system (PTS). HprK/P also catalyzes the pyrophosphate-producing, inorganic phosphate-dependent dephosphorylation (phosphorolysis) of seryl-phosphorylated HPr (P-Ser-HPr). The two antagonistic activities of HprK/P are regulated by several intracellular metabolites, which change their concentration in response to the absence or presence of rapidly metabolisable carbon sources (glucose, fructose, etc.) in the growth medium. Therefore, by controlling the phosphorylation state of HPr, the bifunctional HPr kinase/phosphorylase is a sensor enzyme that plays a major role in the regulation of carbon metabolism and sugar transport: it probably mediates carbon catabolite repression (CCR), and regulates PTS-catalyzed carbohydrate uptake and inducer exclusion. The sequence is that of HPr kinase/phosphorylase (hprK) from Streptococcus salivarius.